The primary structure comprises 111 residues: WAP four-disulfide core domain protein 12 (111 aa).

Positions 1–23 are cleaved as a signal peptide; sequence MGSSSFLVLMVSLALVTLVAAEG. Positions 27-74 constitute a WAP domain; that stretch reads GIEKAGVCPADNIRCFKSDPPQCHTDQDCLGERKCCYLHCGFKCVIPV. 4 disulfides stabilise this stretch: cysteine 34-cysteine 62, cysteine 41-cysteine 66, cysteine 49-cysteine 61, and cysteine 55-cysteine 70. The interval 80–111 is disordered; it reads GGNKDEDVSGPCPEPGWEAKSPGSSSTGCPQK. Residues 101–111 show a composition bias toward polar residues; the sequence is PGSSSTGCPQK.

The protein localises to the secreted. Functionally, antibacterial protein. Putative acid-stable proteinase inhibitor. This is WAP four-disulfide core domain protein 12 (WFDC12) from Macaca mulatta (Rhesus macaque).